A 92-amino-acid chain; its full sequence is Large ribosomal subunit protein eL31 (92 aa).

Belongs to the eukaryotic ribosomal protein eL31 family.

In Desulfurococcus amylolyticus (strain DSM 18924 / JCM 16383 / VKM B-2413 / 1221n) (Desulfurococcus kamchatkensis), this protein is Large ribosomal subunit protein eL31.